The primary structure comprises 557 residues: Glutamine--tRNA ligase (557 aa).

Residues 42-52 carry the 'HIGH' region motif; sequence PEPNGYLHIGH. Residues 43–45 and 49–55 each bind ATP; these read EPN and HIGHAKS. The L-glutamine site is built by Asp-75 and Tyr-220. ATP-binding positions include Thr-239 and 270-271; that span reads RL. Residues 277 to 281 carry the 'KMSKS' region motif; that stretch reads LTSKR.

The protein belongs to the class-I aminoacyl-tRNA synthetase family. In terms of assembly, monomer.

It is found in the cytoplasm. The enzyme catalyses tRNA(Gln) + L-glutamine + ATP = L-glutaminyl-tRNA(Gln) + AMP + diphosphate. The sequence is that of Glutamine--tRNA ligase from Haemophilus influenzae (strain ATCC 51907 / DSM 11121 / KW20 / Rd).